A 94-amino-acid polypeptide reads, in one-letter code: Copper resistance protein K (94 aa).

The first 20 residues, 1-20, serve as a signal peptide directing secretion; that stretch reads MKQKLMVGAFIAAVSLSAAA.

In terms of assembly, monomer in the copper-bound form. Homodimer as apoprotein. Dissociates into monomers upon copper binding.

The protein resides in the periplasm. Involved in resistance to copper. Can bind up to 2 copper ions. Has higher affinity for Cu(+) than for Cu(2+). This is Copper resistance protein K (copK) from Cupriavidus metallidurans (strain ATCC 43123 / DSM 2839 / NBRC 102507 / CH34) (Ralstonia metallidurans).